The chain runs to 142 residues: MRHYETMFILKPTLVEEEIKSKIEFYKEVITKHHGVIETSLDMGMRNLAYEIKKHKRGYYYVAYFKAEPSMIVELERLYRINEDVLRFIVIKYESKKEVEAWHALVDRANKKPSHAKEKHEKTEHTHSHHTEEAESVGSHSE.

Positions 110-133 (NKKPSHAKEKHEKTEHTHSHHTEE) are enriched in basic and acidic residues. A disordered region spans residues 110–142 (NKKPSHAKEKHEKTEHTHSHHTEEAESVGSHSE).

It belongs to the bacterial ribosomal protein bS6 family.

In terms of biological role, binds together with bS18 to 16S ribosomal RNA. The sequence is that of Small ribosomal subunit protein bS6 (rpsF) from Helicobacter pylori (strain ATCC 700392 / 26695) (Campylobacter pylori).